Consider the following 473-residue polypeptide: Photosystem II CP43 reaction center protein (473 aa).

Residues M1–E14 constitute a propeptide that is removed on maturation. Residue T15 is modified to N-acetylthreonine. The residue at position 15 (T15) is a Phosphothreonine. Helical transmembrane passes span L69–A93, L134–N155, K178–T200, K255–S275, and W291–A312. A [CaMn4O5] cluster-binding site is contributed by E367. A helical membrane pass occupies residues R447–P471.

Belongs to the PsbB/PsbC family. PsbC subfamily. In terms of assembly, PSII is composed of 1 copy each of membrane proteins PsbA, PsbB, PsbC, PsbD, PsbE, PsbF, PsbH, PsbI, PsbJ, PsbK, PsbL, PsbM, PsbT, PsbX, PsbY, PsbZ, Psb30/Ycf12, at least 3 peripheral proteins of the oxygen-evolving complex and a large number of cofactors. It forms dimeric complexes. It depends on Binds multiple chlorophylls and provides some of the ligands for the Ca-4Mn-5O cluster of the oxygen-evolving complex. It may also provide a ligand for a Cl- that is required for oxygen evolution. PSII binds additional chlorophylls, carotenoids and specific lipids. as a cofactor.

It is found in the plastid. The protein localises to the chloroplast thylakoid membrane. In terms of biological role, one of the components of the core complex of photosystem II (PSII). It binds chlorophyll and helps catalyze the primary light-induced photochemical processes of PSII. PSII is a light-driven water:plastoquinone oxidoreductase, using light energy to abstract electrons from H(2)O, generating O(2) and a proton gradient subsequently used for ATP formation. The chain is Photosystem II CP43 reaction center protein from Capsella bursa-pastoris (Shepherd's purse).